Reading from the N-terminus, the 180-residue chain is Inner membrane assembly complex subunit 17 (180 aa).

Residues 1-36 constitute a mitochondrion transit peptide; that stretch reads MMIRNQLYRKCIIGGGRSILNGWVINGTVPNIGLRY. Residues 37–105 lie on the Mitochondrial matrix side of the membrane; the sequence is LRSGIVTRSN…RKTQDIPIKR (69 aa). A helical membrane pass occupies residues 106–128; the sequence is FIRPTWMFLLMSSTFYLLGHYIW. A coiled-coil region spans residues 129–163; the sequence is WKLEYDEVEKELDRQVTALEEELHNLIEEHRVHGE. At 129-180 the chain is on the mitochondrial intermembrane side; it reads WKLEYDEVEKELDRQVTALEEELHNLIEEHRVHGENEAIKNKKHKHWYKFWS.

It belongs to the INA17 family. Component of the inner membrane assembly (INA) complex, composed of INA17 and INA22. Interacts with a subset of F(1)F(0)-ATP synthase subunits of the F(1)-domain and the peripheral stalk.

The protein localises to the mitochondrion inner membrane. Component of the INA complex (INAC) that promotes the biogenesis of mitochondrial F(1)F(0)-ATP synthase. INAC facilitates the assembly of the peripheral stalk and promotes the assembly of the catalytic F(1)-domain with the membrane-embedded F(0)-domain. In Vanderwaltozyma polyspora (strain ATCC 22028 / DSM 70294 / BCRC 21397 / CBS 2163 / NBRC 10782 / NRRL Y-8283 / UCD 57-17) (Kluyveromyces polysporus), this protein is Inner membrane assembly complex subunit 17.